We begin with the raw amino-acid sequence, 458 residues long: Cysteine--tRNA ligase (458 aa).

Cys29 is a Zn(2+) binding site. Positions 31–41 match the 'HIGH' region motif; the sequence is PTVYDFLHIGN. 3 residues coordinate Zn(2+): Cys211, His236, and Glu240. Residues 269 to 273 carry the 'KMSKS' region motif; that stretch reads KMSKS. Position 272 (Lys272) interacts with ATP.

Belongs to the class-I aminoacyl-tRNA synthetase family. In terms of assembly, monomer. Zn(2+) is required as a cofactor.

The protein localises to the cytoplasm. It catalyses the reaction tRNA(Cys) + L-cysteine + ATP = L-cysteinyl-tRNA(Cys) + AMP + diphosphate. This chain is Cysteine--tRNA ligase, found in Beijerinckia indica subsp. indica (strain ATCC 9039 / DSM 1715 / NCIMB 8712).